A 456-amino-acid chain; its full sequence is Ribonuclease inhibitor (456 aa).

Met-1 bears the N-acetylmethionine mark. 15 LRR repeats span residues Trp-15–Ile-43, Gly-44–Val-71, Leu-72–Leu-100, Pro-101–Leu-128, Cys-129–Leu-157, Ala-158–Leu-185, Gly-186–Leu-214, Cys-215–Leu-242, Cys-243–Leu-271, Cys-272–Leu-299, Cys-300–Val-328, Ser-329–Leu-356, Cys-357–Leu-385, Ala-386–Leu-413, and Leu-414–Leu-442. Phosphoserine is present on Ser-86.

In terms of assembly, forms high-affinity heterodimers with RNASE1, ANG and RNASE2.

Its subcellular location is the cytoplasm. It localises to the nucleus. Its function is as follows. Ribonuclease inhibitor which inhibits RNASE1, RNASE2 and angiogenin (ANG). May play a role in redox homeostasis. Required to inhibit the cytotoxic tRNA ribonuclease activity of ANG in the cytoplasm in absence of stress. Relocates to the nucleus in response to stress, relieving inhibition of ANG in the cytoplasm, and inhibiting the angiogenic activity of ANG in the nucleus. This Sus scrofa (Pig) protein is Ribonuclease inhibitor (RNH1).